A 212-amino-acid chain; its full sequence is Pyridoxine/pyridoxamine 5'-phosphate oxidase (212 aa).

Substrate is bound by residues 8–11 (RREY) and Lys66. FMN is bound by residues 61–66 (RIVLLK), 76–77 (FT), Arg82, Lys83, and Gln105. Substrate contacts are provided by Tyr123, Arg127, and Ser131. FMN is bound by residues 140–141 (QS) and Trp185. 191-193 (RLH) is a substrate binding site. Arg195 lines the FMN pocket.

The protein belongs to the pyridoxamine 5'-phosphate oxidase family. Homodimer. The cofactor is FMN.

It catalyses the reaction pyridoxamine 5'-phosphate + O2 + H2O = pyridoxal 5'-phosphate + H2O2 + NH4(+). It carries out the reaction pyridoxine 5'-phosphate + O2 = pyridoxal 5'-phosphate + H2O2. Its pathway is cofactor metabolism; pyridoxal 5'-phosphate salvage; pyridoxal 5'-phosphate from pyridoxamine 5'-phosphate: step 1/1. It participates in cofactor metabolism; pyridoxal 5'-phosphate salvage; pyridoxal 5'-phosphate from pyridoxine 5'-phosphate: step 1/1. Catalyzes the oxidation of either pyridoxine 5'-phosphate (PNP) or pyridoxamine 5'-phosphate (PMP) into pyridoxal 5'-phosphate (PLP). This is Pyridoxine/pyridoxamine 5'-phosphate oxidase from Shewanella sp. (strain MR-7).